We begin with the raw amino-acid sequence, 163 residues long: MAKESSFDIVSKVDLAEVTNAINIAMKEIKTRYDFKGSKSDISLEKDELVLISDDEFKLEQLKDVLIGKLIKRGVATKNIQYGKIEPASGGTVRQRAKLVQGIDKDNAKKINTIIKSTGLKVKSQVQDDQIRVSGKSKDDLQKVIAAIREADLPIDVQFVNYR.

It belongs to the YajQ family.

Its function is as follows. Nucleotide-binding protein. The sequence is that of Nucleotide-binding protein GTNG_0630 from Geobacillus thermodenitrificans (strain NG80-2).